The sequence spans 339 residues: Dehydrogenase/reductase SDR family member 7 (339 aa).

The first 28 residues, 1 to 28 (MNWELLLWLLVLCALLLLLVQLLRFLRA), serve as a signal peptide directing secretion. NAD(+) is bound by residues Ser-60 and Ile-62. Ser-190 is a binding site for substrate. Residues Tyr-203, Lys-207, and Ser-239 each coordinate NAD(+). The active-site Proton acceptor is the Tyr-203.

It belongs to the short-chain dehydrogenases/reductases (SDR) family. In terms of tissue distribution, found predominantly in the adrenal glands, liver, thyroid, prostate, small intestine, colon, stomach, kidney and brain. Lower levels observed in skeletal muscle, the lung and the spleen.

It localises to the endoplasmic reticulum membrane. It carries out the reaction all-trans-retinol + NADP(+) = all-trans-retinal + NADPH + H(+). The catalysed reaction is 5alpha-androstane-3alpha,17beta-diol + NADP(+) = 17beta-hydroxy-5alpha-androstan-3-one + NADPH + H(+). In terms of biological role, NADPH-dependent oxidoreductase which catalyzes the reduction of a variety of compounds bearing carbonyl groups including steroids, retinoids and xenobiotics. Catalyzes the reduction/inactivation of 5alpha-dihydrotestosterone to 3alpha-androstanediol, with a possible role in the modulation of androgen receptor function. Involved in the reduction of all-trans-retinal to all-trans-retinol. Converts cortisone to 20beta-dihydrocortisone in vitro, although the physiological relevance of this activity is questionable. Reduces exogenous compounds such as quinones (1,2-naphtoquinone, 9,10-phenantrenequinone and benzoquinone) and other xenobiotics (alpha-diketones) in vitro, suggesting a role in the biotransformation of xenobiotics with carbonyl group. A dehydrogenase activity has not been detected so far. May play a role as tumor suppressor. This Homo sapiens (Human) protein is Dehydrogenase/reductase SDR family member 7.